Here is a 126-residue protein sequence, read N- to C-terminus: Nascent polypeptide-associated complex protein (126 aa).

Residues 10–77 (PRMMKQMQKM…AKKVAKEEEK (68 aa)) form the NAC-A/B domain.

Belongs to the NAC-alpha family. In terms of assembly, homodimer. Interacts with the ribosome. Binds ribosomal RNA.

Functionally, contacts the emerging nascent chain on the ribosome. This chain is Nascent polypeptide-associated complex protein, found in Methanococcus maripaludis (strain C7 / ATCC BAA-1331).